A 440-amino-acid polypeptide reads, in one-letter code: Cell division protein FtsA (440 aa).

The disordered stretch occupies residues 396 to 440; that stretch reads VSSSEEQEQHHHQNEVQQRPKGKQKTQAEHNKQSKMKKLLSMFWE.

The protein belongs to the FtsA/MreB family. Homodimer. Interacts with FtsZ.

It is found in the cell membrane. Its function is as follows. Cell division protein that is required for the assembly of the Z ring. May serve as a membrane anchor for the Z ring. Binds and hydrolyzes ATP. Also involved in sporulation. The chain is Cell division protein FtsA from Bacillus subtilis (strain 168).